The following is a 412-amino-acid chain: Probable serine/threonine-protein kinase PBL4 (412 aa).

Gly-2 is lipidated: N-myristoyl glycine. The S-palmitoyl cysteine moiety is linked to residue Cys-4. Residues 14–40 (RESPYRGSSRISAKRSQSSRLSSLTIQ) are disordered. The span at 21–40 (SSRISAKRSQSSRLSSLTIQ) shows a compositional bias: low complexity. Phosphothreonine is present on Thr-72. In terms of domain architecture, Protein kinase spans 83–369 (FRPDSVIGEG…STLEELEMTL (287 aa)). ATP-binding positions include 89–97 (IGEGGFGYV) and Lys-121. Tyr-167 is modified (phosphotyrosine). Residue Asp-215 is the Proton acceptor of the active site. Phosphoserine is present on residues Ser-219 and Ser-249. Phosphothreonine occurs at positions 250 and 255. Phosphotyrosine is present on Tyr-263.

Belongs to the protein kinase superfamily. Ser/Thr protein kinase family.

The protein localises to the cell membrane. It catalyses the reaction L-seryl-[protein] + ATP = O-phospho-L-seryl-[protein] + ADP + H(+). It carries out the reaction L-threonyl-[protein] + ATP = O-phospho-L-threonyl-[protein] + ADP + H(+). Its function is as follows. May be involved in plant defense signaling. The sequence is that of Probable serine/threonine-protein kinase PBL4 from Arabidopsis thaliana (Mouse-ear cress).